The following is a 533-amino-acid chain: Chromosomal replication initiator protein DnaA (533 aa).

Positions 1 to 72 are domain I, interacts with DnaA modulators; the sequence is MNDFWQHCSA…DLARDFWNAP (72 aa). Residues 72–196 form a domain II region; the sequence is PIEVQFVLDP…EAADSMYERS (125 aa). The interval 83-113 is disordered; it reads AGQRSPAGATPLAPRAPLPSANPAPVAPGPA. Positions 96 to 110 are enriched in pro residues; it reads PRAPLPSANPAPVAP. Positions 197–413 are domain III, AAA+ region; it reads KLNPVLTFDN…GALRKILAYS (217 aa). Residues G241, G243, K244, and T245 each coordinate ATP. Positions 414 to 533 are domain IV, binds dsDNA; sequence KFHGREITIE…LHVLEQTLKG (120 aa).

This sequence belongs to the DnaA family. Oligomerizes as a right-handed, spiral filament on DNA at oriC.

The protein localises to the cytoplasm. Plays an essential role in the initiation and regulation of chromosomal replication. ATP-DnaA binds to the origin of replication (oriC) to initiate formation of the DNA replication initiation complex once per cell cycle. Binds the DnaA box (a 9 base pair repeat at the origin) and separates the double-stranded (ds)DNA. Forms a right-handed helical filament on oriC DNA; dsDNA binds to the exterior of the filament while single-stranded (ss)DNA is stabiized in the filament's interior. The ATP-DnaA-oriC complex binds and stabilizes one strand of the AT-rich DNA unwinding element (DUE), permitting loading of DNA polymerase. After initiation quickly degrades to an ADP-DnaA complex that is not apt for DNA replication. Binds acidic phospholipids. This chain is Chromosomal replication initiator protein DnaA, found in Burkholderia mallei (strain SAVP1).